The primary structure comprises 462 residues: Threonine--tRNA ligase, mitochondrial (462 aa).

The N-terminal 45 residues, 1 to 45, are a transit peptide targeting the mitochondrion; sequence MKIQLVRWHCSRNALWNRAFYSTRKATKNASSATPATMTSMVSQR.

This sequence belongs to the class-II aminoacyl-tRNA synthetase family.

The protein localises to the mitochondrion matrix. The enzyme catalyses tRNA(Thr) + L-threonine + ATP = L-threonyl-tRNA(Thr) + AMP + diphosphate + H(+). This is Threonine--tRNA ligase, mitochondrial (MST1) from Saccharomyces cerevisiae (strain ATCC 204508 / S288c) (Baker's yeast).